We begin with the raw amino-acid sequence, 117 residues long: MHEYSIVSALIEQCEQHALANHAAKITRVDIKLGVMSGVEPSLLQTAFDTFKLDGICNAAQLNIQIQPLVILCQDCQSESVLSERTIVCPACQSYRTRVLDGEDMLLMQLEMEQEED.

Residue His-2 participates in Ni(2+) binding. Positions 73, 76, 89, and 92 each coordinate Zn(2+).

Belongs to the HypA/HybF family.

Functionally, involved in the maturation of [NiFe] hydrogenases. Required for nickel insertion into the metal center of the hydrogenase. This is Hydrogenase maturation factor HypA from Shewanella baltica (strain OS223).